The sequence spans 300 residues: Glycerol-3-phosphate dehydrogenase [NAD(P)+] (300 aa).

NADPH-binding residues include W11, K33, and K79. Residues K79, G107, and S109 each coordinate sn-glycerol 3-phosphate. A111 is an NADPH binding site. Sn-glycerol 3-phosphate-binding residues include K161, D214, S224, R225, and N226. K161 acts as the Proton acceptor in catalysis. An NADPH-binding site is contributed by R225. Positions 249 and 251 each coordinate NADPH.

It belongs to the NAD-dependent glycerol-3-phosphate dehydrogenase family.

It localises to the cytoplasm. It carries out the reaction sn-glycerol 3-phosphate + NAD(+) = dihydroxyacetone phosphate + NADH + H(+). The enzyme catalyses sn-glycerol 3-phosphate + NADP(+) = dihydroxyacetone phosphate + NADPH + H(+). Its pathway is membrane lipid metabolism; glycerophospholipid metabolism. In terms of biological role, catalyzes the reduction of the glycolytic intermediate dihydroxyacetone phosphate (DHAP) to sn-glycerol 3-phosphate (G3P), the key precursor for phospholipid synthesis. The chain is Glycerol-3-phosphate dehydrogenase [NAD(P)+] from Campylobacter lari (strain RM2100 / D67 / ATCC BAA-1060).